A 124-amino-acid chain; its full sequence is Peptidyl-tRNA hydrolase (124 aa).

This sequence belongs to the PTH2 family.

Its subcellular location is the cytoplasm. The catalysed reaction is an N-acyl-L-alpha-aminoacyl-tRNA + H2O = an N-acyl-L-amino acid + a tRNA + H(+). The natural substrate for this enzyme may be peptidyl-tRNAs which drop off the ribosome during protein synthesis. In Aeropyrum pernix (strain ATCC 700893 / DSM 11879 / JCM 9820 / NBRC 100138 / K1), this protein is Peptidyl-tRNA hydrolase.